The sequence spans 579 residues: Nuclear hormone receptor family member nhr-22 (579 aa).

A DNA-binding region (nuclear receptor) is located at residues 93–173 (SRSCHVCSSP…AGMRRELVQA (81 aa)). 2 consecutive NR C4-type zinc fingers follow at residues 96 to 117 (CHVCSSPTANTLHFGGRSCKAC) and 133 to 161 (CIGTGDDTNPCRTHYELRMICRHCRFIKC). Low complexity predominate over residues 233 to 242 (LSPDPSSSQP). A disordered region spans residues 233–256 (LSPDPSSSQPLDMTVTPPPLHRST). Positions 304-577 (EVENKIFELV…SIMYDLLSFR (274 aa)) constitute an NR LBD domain.

It belongs to the nuclear hormone receptor family.

It is found in the nucleus. Orphan nuclear receptor. This is Nuclear hormone receptor family member nhr-22 (nhr-22) from Caenorhabditis elegans.